The chain runs to 98 residues: MEIEVVDVSRNEIRVLIRGETHTLLSPLVEELNSLDEVEFAGYDVPHPLKEESVLFLRVKEGMNPREVLKGAIRRLMEKYEIIGNSFIEELSSLKVNH.

The protein belongs to the archaeal Rpo11/eukaryotic RPB11/RPC19 RNA polymerase subunit family. Part of the RNA polymerase complex.

It is found in the cytoplasm. The enzyme catalyses RNA(n) + a ribonucleoside 5'-triphosphate = RNA(n+1) + diphosphate. DNA-dependent RNA polymerase (RNAP) catalyzes the transcription of DNA into RNA using the four ribonucleoside triphosphates as substrates. In Korarchaeum cryptofilum (strain OPF8), this protein is DNA-directed RNA polymerase subunit Rpo11.